The primary structure comprises 248 residues: Tyrosine recombinase XerD-like (248 aa).

The 72-residue stretch at 1 to 72 (MKSYIEPFIA…TANQFLYYLY (72 aa)) folds into the Core-binding (CB) domain. In terms of domain architecture, Tyr recombinase spans 85–248 (DTMKVMRTEK…PVTLEKYYKS (164 aa)). Active-site residues include K149 and R213. Y245 (O-(3'-phospho-DNA)-tyrosine intermediate) is an active-site residue.

This sequence belongs to the 'phage' integrase family. XerD-like subfamily.

Its subcellular location is the cytoplasm. Its function is as follows. Putative tyrosine recombinase. Not involved in the cutting and rejoining of the recombining DNA molecules on dif(SL) site. This is Tyrosine recombinase XerD-like from Streptococcus pyogenes serotype M6 (strain ATCC BAA-946 / MGAS10394).